A 548-amino-acid chain; its full sequence is Pentatricopeptide repeat-containing protein At1g62680, mitochondrial (548 aa).

A mitochondrion-targeting transit peptide spans 1–43; that stretch reads MQRSIAMTAKRFLHRNLLENGKPRTASSPSFSHCSSCRCWVRA. PPR repeat units follow at residues 84–118, 119–153, 154–188, 189–223, 224–258, 259–293, 294–328, 329–363, 364–398, 399–433, 434–468, and 469–503; these read SIVD…GIRN, DLYT…GYEP, DRVT…GYKP, DIVA…GIRP, NVVT…KITP, NVIT…SIDP, DIVT…GCLA, DVVS…GLVS, NTVT…GISP, DIWT…EMDL, DIVT…GLKP, and DIVT…GLMK.

It belongs to the PPR family. P subfamily.

The protein localises to the mitochondrion. This is Pentatricopeptide repeat-containing protein At1g62680, mitochondrial from Arabidopsis thaliana (Mouse-ear cress).